The sequence spans 332 residues: Adenosine deaminase (332 aa).

Zn(2+)-binding residues include His-12 and His-14. The substrate site is built by His-14, Asp-16, and Gly-170. His-197 provides a ligand contact to Zn(2+). Glu-200 (proton donor) is an active-site residue. Asp-278 provides a ligand contact to Zn(2+). Substrate is bound at residue Asp-279.

Belongs to the metallo-dependent hydrolases superfamily. Adenosine and AMP deaminases family. Adenosine deaminase subfamily. The cofactor is Zn(2+).

The enzyme catalyses adenosine + H2O + H(+) = inosine + NH4(+). It carries out the reaction 2'-deoxyadenosine + H2O + H(+) = 2'-deoxyinosine + NH4(+). Its function is as follows. Catalyzes the hydrolytic deamination of adenosine and 2-deoxyadenosine. The protein is Adenosine deaminase of Erwinia tasmaniensis (strain DSM 17950 / CFBP 7177 / CIP 109463 / NCPPB 4357 / Et1/99).